Here is a 63-residue protein sequence, read N- to C-terminus: MNNKINNIKITQVHSAIGRKYDQRLILVGLGLNKINKSVILANTNSIKGMVKKVKHLLKIENM.

It belongs to the universal ribosomal protein uL30 family. Part of the 50S ribosomal subunit.

The sequence is that of Large ribosomal subunit protein uL30 from Rickettsia peacockii (strain Rustic).